The following is a 256-amino-acid chain: MRYQASPALAKAPRALLCIHGAGCSPAIFRVQLSKLRAALREDFEFVYVTAPFPSSAGPGILPVFADLGPYYSWFESSSGNNNNGPSVGERLAAVHDPIRRTIVDWQTQHPHIPIVGAIGFSEGALVTTLLLWQQQMGRLPWLPRMSVAMLICPWYQDEASQYMRNEVMENHDDDHDSKDTEWQEELVIRIPTLHLQGRDDFALAGSKMLVARHFSPREAQVLEFAGQHQFPNRPRDVLEVINRFRKLCVTVQTLE.

Residues Ser-122, Asp-201, and His-229 each act as charge relay system in the active site.

This sequence belongs to the LovG family.

It carries out the reaction dihydromonacolin L-[lovastatin nonaketide synthase] + H2O = holo-[lovastatin nonaketide synthase] + dihydromonacolin L carboxylate + H(+). It functions in the pathway polyketide biosynthesis; lovastatin biosynthesis. In terms of biological role, esterase; part of the gene cluster that mediates the biosynthesis of lovastatin (also known as mevinolin, mevacor or monacolin K), a hypolipidemic inhibitor of (3S)-hydroxymethylglutaryl-coenzyme A (HMG-CoA) reductase (HMGR). The first step in the biosynthesis of lovastatin is the production of dihydromonacolin L acid by the lovastatin nonaketide synthase lovB and the trans-acting enoyl reductase lovC via condensation of one acetyl-CoA unit and 8 malonyl-CoA units. Dihydromonacolin L acid is released from lovB by the thioesterase lovG. Next, dihydromonacolin L acid is oxidized by the dihydromonacolin L monooxygenase lovA twice to form monacolin J acid. The 2-methylbutyrate moiety of lovastatin is synthesized by the lovastatin diketide synthase lovF via condensation of one acetyl-CoA unit and one malonyl-CoA unit. Finally, the covalent attachment of this moiety to monacolin J acid is catalyzed by the transesterase lovD to yield lovastatin. LovD has broad substrate specificity and can also convert monacolin J to simvastatin using alpha-dimethylbutanoyl-S-methyl-3-mercaptopropionate (DMB-S-MMP) as the thioester acyl donor, and can also catalyze the reverse reaction and function as hydrolase in vitro. LovD has much higher activity with LovF-bound 2-methylbutanoate than with free diketide substrates. Its function is as follows. Esterase that catalyzes the release of covalently bound dihydromonacolin L from LovB during lovastatin biosynthesis. In Aspergillus terreus (strain NIH 2624 / FGSC A1156), this protein is Dihydromonacolin L-[lovastatin nonaketide synthase] thioesterase.